A 234-amino-acid chain; its full sequence is UPF0502 protein Bphyt_5265 (234 aa).

This sequence belongs to the UPF0502 family.

This is UPF0502 protein Bphyt_5265 from Paraburkholderia phytofirmans (strain DSM 17436 / LMG 22146 / PsJN) (Burkholderia phytofirmans).